The following is a 504-amino-acid chain: 2-isopropylmalate synthase (504 aa).

Positions 6–267 (IIIFDTTLRD…YTGIISKEIY (262 aa)) constitute a Pyruvate carboxyltransferase domain. Mn(2+) contacts are provided by D15, H201, H203, and N237. The interval 391 to 504 (EITDLLQSSG…LNSYLRIHKN (114 aa)) is regulatory domain.

This sequence belongs to the alpha-IPM synthase/homocitrate synthase family. LeuA type 1 subfamily. As to quaternary structure, homodimer. It depends on Mn(2+) as a cofactor.

The protein resides in the cytoplasm. It catalyses the reaction 3-methyl-2-oxobutanoate + acetyl-CoA + H2O = (2S)-2-isopropylmalate + CoA + H(+). It participates in amino-acid biosynthesis; L-leucine biosynthesis; L-leucine from 3-methyl-2-oxobutanoate: step 1/4. Its function is as follows. Catalyzes the condensation of the acetyl group of acetyl-CoA with 3-methyl-2-oxobutanoate (2-ketoisovalerate) to form 3-carboxy-3-hydroxy-4-methylpentanoate (2-isopropylmalate). The sequence is that of 2-isopropylmalate synthase from Campylobacter concisus (strain 13826).